Reading from the N-terminus, the 390-residue chain is Coenzyme A biosynthesis bifunctional protein CoaBC (390 aa).

A phosphopantothenoylcysteine decarboxylase region spans residues 1–188 (MDKNKHILIG…NQKDYLKNKK (188 aa)). Catalysis depends on Cys-156, which acts as the Proton donor. Positions 189 to 390 (ILITASRTEE…VAKEILKILY (202 aa)) are phosphopantothenate--cysteine ligase. CTP contacts are provided by residues Asp-277, Lys-287, 304–307 (PDII), Phe-323, Lys-338, and Lys-342.

It in the N-terminal section; belongs to the HFCD (homo-oligomeric flavin containing Cys decarboxylase) superfamily. In the C-terminal section; belongs to the PPC synthetase family. Requires Mg(2+) as cofactor. The cofactor is FMN.

It carries out the reaction N-[(R)-4-phosphopantothenoyl]-L-cysteine + H(+) = (R)-4'-phosphopantetheine + CO2. The catalysed reaction is (R)-4'-phosphopantothenate + L-cysteine + CTP = N-[(R)-4-phosphopantothenoyl]-L-cysteine + CMP + diphosphate + H(+). It participates in cofactor biosynthesis; coenzyme A biosynthesis; CoA from (R)-pantothenate: step 2/5. The protein operates within cofactor biosynthesis; coenzyme A biosynthesis; CoA from (R)-pantothenate: step 3/5. Its function is as follows. Catalyzes two sequential steps in the biosynthesis of coenzyme A. In the first step cysteine is conjugated to 4'-phosphopantothenate to form 4-phosphopantothenoylcysteine. In the second step the latter compound is decarboxylated to form 4'-phosphopantotheine. This is Coenzyme A biosynthesis bifunctional protein CoaBC from Borreliella burgdorferi (strain ATCC 35210 / DSM 4680 / CIP 102532 / B31) (Borrelia burgdorferi).